The sequence spans 159 residues: Cyclic pyranopterin monophosphate synthase (159 aa).

Residues 75 to 77 (LCH) and 113 to 114 (ME) contribute to the substrate site. The active site involves aspartate 128.

This sequence belongs to the MoaC family. As to quaternary structure, homohexamer; trimer of dimers.

It catalyses the reaction (8S)-3',8-cyclo-7,8-dihydroguanosine 5'-triphosphate = cyclic pyranopterin phosphate + diphosphate. It functions in the pathway cofactor biosynthesis; molybdopterin biosynthesis. Functionally, catalyzes the conversion of (8S)-3',8-cyclo-7,8-dihydroguanosine 5'-triphosphate to cyclic pyranopterin monophosphate (cPMP). The polypeptide is Cyclic pyranopterin monophosphate synthase (Aliivibrio fischeri (strain MJ11) (Vibrio fischeri)).